We begin with the raw amino-acid sequence, 174 residues long: ATP synthase subunit delta, sodium ion specific (174 aa).

This sequence belongs to the ATPase delta chain family. As to quaternary structure, F-type ATPases have 2 components, F(1) - the catalytic core - and F(0) - the membrane proton channel. F(1) has five subunits: alpha(3), beta(3), gamma(1), delta(1), epsilon(1). F(0) has three main subunits: a(1), b(2) and c(10-14). The alpha and beta chains form an alternating ring which encloses part of the gamma chain. F(1) is attached to F(0) by a central stalk formed by the gamma and epsilon chains, while a peripheral stalk is formed by the delta and b chains.

The protein localises to the cell inner membrane. Its function is as follows. F(1)F(0) ATP synthase produces ATP from ADP in the presence of a proton or sodium gradient. F-type ATPases consist of two structural domains, F(1) containing the extramembraneous catalytic core and F(0) containing the membrane proton channel, linked together by a central stalk and a peripheral stalk. During catalysis, ATP synthesis in the catalytic domain of F(1) is coupled via a rotary mechanism of the central stalk subunits to proton translocation. This protein is part of the stalk that links CF(0) to CF(1). It either transmits conformational changes from CF(0) to CF(1) or is implicated in proton conduction. In Ilyobacter tartaricus, this protein is ATP synthase subunit delta, sodium ion specific.